The sequence spans 122 residues: Small ribosomal subunit protein uS13 (122 aa).

The tract at residues 95–122 (GLPVRGQRTKTNARTRKGPKKTIAGKKK) is disordered.

The protein belongs to the universal ribosomal protein uS13 family. As to quaternary structure, part of the 30S ribosomal subunit. Forms a loose heterodimer with protein S19. Forms two bridges to the 50S subunit in the 70S ribosome.

Functionally, located at the top of the head of the 30S subunit, it contacts several helices of the 16S rRNA. In the 70S ribosome it contacts the 23S rRNA (bridge B1a) and protein L5 of the 50S subunit (bridge B1b), connecting the 2 subunits; these bridges are implicated in subunit movement. Contacts the tRNAs in the A and P-sites. The sequence is that of Small ribosomal subunit protein uS13 from Corynebacterium aurimucosum (strain ATCC 700975 / DSM 44827 / CIP 107346 / CN-1) (Corynebacterium nigricans).